Consider the following 156-residue polypeptide: Acyl carrier protein, mitochondrial (156 aa).

Residues 1–68 (MASRVLSAYV…GRVTQLCRQY (68 aa)) constitute a mitochondrion transit peptide. One can recognise a Carrier domain in the interval 77 to 152 (EGIQDRVLYV…EIVDYIADKK (76 aa)). Lys-88 is subject to N6-acetyllysine. Ser-112 is modified (O-(pantetheine 4'-phosphoryl)serine).

This sequence belongs to the acyl carrier protein (ACP) family. Mammalian complex I is composed of 45 different subunits. Interacts with ETFRF1. Identified in a complex composed of MALSU1, MIEF1 upstream open reading frame protein and NDUFAB1; within the trimeric complex, MIEF1 upstream open reading frame protein functions as a bridging scaffold that interacts with MALSU1 on one side, and with NDUFAB1 on the other side. The complex interacts with the mitochondrial large ribosomal subunit. Interacts with alpha-1-microglobulin chain; this interaction is required for the maintenance of mitochondrial redox homeostasis. Component of the mitochondrial core iron-sulfur cluster (ISC) complex composed of NFS1, LYRM4, NDUFAB1, ISCU, FXN, and FDX2; this complex is a heterohexamer containing two copies of each monomer. Component of the cyteine desulfurase complex composed of NFS1, LYRM4 and NDUFAB1; this complex contributes to the stability and cysteine desulfurase activity of NFS1. Post-translationally, phosphopantetheinylation at Ser-112 is essential for interactions with LYR motif-containing proteins.

It is found in the mitochondrion. Carrier of the growing fatty acid chain in fatty acid biosynthesis. Accessory and non-catalytic subunit of the mitochondrial membrane respiratory chain NADH dehydrogenase (Complex I), which functions in the transfer of electrons from NADH to the respiratory chain. Accessory protein, of the core iron-sulfur cluster (ISC) assembly complex, that regulates, in association with LYRM4, the stability and the cysteine desulfurase activity of NFS1 and participates in the [2Fe-2S] clusters assembly on the scaffolding protein ISCU. The core iron-sulfur cluster (ISC) assembly complex is involved in the de novo synthesis of a [2Fe-2S] cluster, the first step of the mitochondrial iron-sulfur protein biogenesis. This process is initiated by the cysteine desulfurase complex (NFS1:LYRM4:NDUFAB1) that produces persulfide which is delivered on the scaffold protein ISCU in a FXN-dependent manner. Then this complex is stabilized by FDX2 which provides reducing equivalents to accomplish the [2Fe-2S] cluster assembly. Finally, the [2Fe-2S] cluster is transferred from ISCU to chaperone proteins, including HSCB, HSPA9 and GLRX5. The chain is Acyl carrier protein, mitochondrial from Gorilla gorilla gorilla (Western lowland gorilla).